Consider the following 198-residue polypeptide: Protein ORFi in retron Ec67 (198 aa).

Belongs to the CI repressor protein family.

The protein is Protein ORFi in retron Ec67 of Escherichia coli.